We begin with the raw amino-acid sequence, 358 residues long: Trace amine-associated receptor 7a (358 aa).

Over 1 to 47 (MDKLVDNFLSGQSRTMSEDLLSASSPQLCYENLNGSCIRSPYSPGPR) the chain is Extracellular. The N-linked (GlcNAc...) asparagine glycan is linked to Asn34. 2 cysteine pairs are disulfide-bonded: Cys37/Cys201 and Cys120/Cys205. Residues 48 to 68 (LILYAVFGFGAVLAVCGNLLV) traverse the membrane as a helical segment. The Cytoplasmic portion of the chain corresponds to 69 to 83 (MTSILHFRQLHSPAN). The chain crosses the membrane as a helical span at residues 84–104 (FLVASLACADFLVGLTVMPFS). Residues 105-121 (TVRSVEGCWYFGDTYCK) lie on the Extracellular side of the membrane. The chain crosses the membrane as a helical span at residues 122–143 (FHSCFEGSFCYSSIFHLCFISV). Topologically, residues 144 to 166 (DRYIAVSDPLIYPTRFTASVSGK) are cytoplasmic. Residues 167 to 187 (CITFSWLLSIIYSFSLLYTGA) form a helical membrane-spanning segment. Residues 188-212 (NEAGLEDLVSALTCVGGCQIAVNQS) are Extracellular-facing. Residue Asn210 is glycosylated (N-linked (GlcNAc...) asparagine). A helical transmembrane segment spans residues 213 to 233 (WVFINFLLFLVPTLVMMTVYS). Topologically, residues 234 to 274 (KIFLIAKQQAQNIEKMSKQTTRASESYKDRVAKRERKAAKT) are cytoplasmic. The chain crosses the membrane as a helical span at residues 275–295 (LGIAVAAFLLSWLPYFIDSII). Residues 296–309 (DAFLGFITPTYVYE) are Extracellular-facing. The helical transmembrane segment at 310-333 (ILVWIAYYNSAMNPLIYAFFYPWF) threads the bilayer. At 334-358 (RKAIKLIVTGKILRQNSSVTNLFPE) the chain is on the cytoplasmic side.

The protein belongs to the G-protein coupled receptor 1 family.

Its subcellular location is the cell membrane. Functionally, olfactory receptor specific for N,N-dimethylalkylamines trace amines. Trace amine compounds are enriched in animal body fluids and act on trace amine-associated receptors (TAARs) to elicit both intraspecific and interspecific innate behaviors. Ligand-binding causes a conformation change that triggers signaling via G(s)-class of G alpha proteins (GNAL or GNAS). The sequence is that of Trace amine-associated receptor 7a from Rattus norvegicus (Rat).